A 380-amino-acid chain; its full sequence is Cytochrome b (380 aa).

4 consecutive transmembrane segments (helical) span residues 34-54, 78-99, 114-134, and 179-199; these read FGSL…LLAM, WLIR…YLHI, WNTG…GYVL, and FFAL…IHLT. Positions 84 and 98 each coordinate heme b. H183 and H197 together coordinate heme b. Residue H202 coordinates a ubiquinone. Helical transmembrane passes span 227 to 247, 289 to 309, 321 to 341, and 348 to 368; these read LKDI…ALFS, LGGV…PFLH, LSQL…WVGS, and FIII…ILFP.

It belongs to the cytochrome b family. In terms of assembly, the cytochrome bc1 complex contains 11 subunits: 3 respiratory subunits (MT-CYB, CYC1 and UQCRFS1), 2 core proteins (UQCRC1 and UQCRC2) and 6 low-molecular weight proteins (UQCRH/QCR6, UQCRB/QCR7, UQCRQ/QCR8, UQCR10/QCR9, UQCR11/QCR10 and a cleavage product of UQCRFS1). This cytochrome bc1 complex then forms a dimer. Requires heme b as cofactor.

It localises to the mitochondrion inner membrane. Functionally, component of the ubiquinol-cytochrome c reductase complex (complex III or cytochrome b-c1 complex) that is part of the mitochondrial respiratory chain. The b-c1 complex mediates electron transfer from ubiquinol to cytochrome c. Contributes to the generation of a proton gradient across the mitochondrial membrane that is then used for ATP synthesis. This Pterodroma hypoleuca (Bonin petrel) protein is Cytochrome b (MT-CYB).